Reading from the N-terminus, the 274-residue chain is Orotidine 5'-phosphate decarboxylase (274 aa).

Residues Asp40, 62 to 64, 93 to 102, Tyr227, and Arg245 contribute to the substrate site; these read KTH and DRKFIDIGNT. The active-site Proton donor is Lys95.

This sequence belongs to the OMP decarboxylase family.

It carries out the reaction orotidine 5'-phosphate + H(+) = UMP + CO2. It participates in pyrimidine metabolism; UMP biosynthesis via de novo pathway; UMP from orotate: step 2/2. The polypeptide is Orotidine 5'-phosphate decarboxylase (pyrG) (Emericella nidulans (strain FGSC A4 / ATCC 38163 / CBS 112.46 / NRRL 194 / M139) (Aspergillus nidulans)).